Reading from the N-terminus, the 251-residue chain is 14-3-3-like protein (251 aa).

The protein belongs to the 14-3-3 family. As to expression, most abundant in roots and flowers.

This Nicotiana tabacum (Common tobacco) protein is 14-3-3-like protein.